We begin with the raw amino-acid sequence, 423 residues long: Core protease OPG082 (423 aa).

Residues histidine 241, aspartate 248, and cysteine 328 contribute to the active site.

The protein belongs to the peptidase C57 family.

It localises to the virion. Its function is as follows. Late protein responsible for processing most or all of the viral core and membrane proteins known to undergo morphogenesis-associated proteolysis. These proteolytic events are involved in the transformation of immature virions (IV) into mature virions (MV). Probably cleaves at least the OPG129, OPG136, OPG098, and OPG144 precursors preferentially at Ala-Gly-|-Ala motifs. Also seems to process Ala-Gly-|-Ser and Ala-Gly-|-Thr motifs. The polypeptide is Core protease OPG082 (OPG083) (Homo sapiens (Human)).